The following is a 149-amino-acid chain: Protein FAM72A (149 aa).

The protein belongs to the FAM72 family. In terms of assembly, interacts with UNG. In terms of tissue distribution, expressed at high levels in stomach and also in kidney and, at low levels, in heart (at protein level). In the stomach, highly expressed in foveolar cells, parietal cells and chief cells (at protein level). In kidney, expressed in endothelial cells, mesangial and epithelial cells (parietal and visceral epithelium) around glomerulus (at protein level).

It localises to the cytoplasm. The protein resides in the mitochondrion. Functionally, may play a role in the regulation of cellular reactive oxygen species metabolism. May participate in cell growth regulation. The polypeptide is Protein FAM72A (Fam72a) (Rattus norvegicus (Rat)).